The sequence spans 723 residues: Epidermal growth factor receptor kinase substrate 8-like protein 1 (723 aa).

In terms of domain architecture, PTB spans 35–164; the sequence is QYPVNHLVTF…LHNYRSGRGE (130 aa). The span at 162–183 shows a compositional bias: basic and acidic residues; that stretch reads RGERRAAALRATQEELQRDRSP. 4 disordered regions span residues 162 to 247, 442 to 477, 537 to 589, and 609 to 636; these read RGER…PRGP, KQLQ…LESE, GPRL…GLDP, and LAQG…GSDA. Ser182 is modified (phosphoserine). Thr187 is subject to Phosphothreonine. The SH3 domain maps to 478 to 537; that stretch reads TAGKWVLCNYDFQARNSSELSVKQRDVLEVLDDSRKWWKVRDPAGQEGYVPYNILTPYPG. Polar residues predominate over residues 543 to 552; it reads SQSPARSLNS. Residues 553–568 are compositionally biased toward pro residues; sequence TPPPPPAPAPAPPPAL. A compositionally biased stretch (basic and acidic residues) spans 571–580; it reads PRWDRPRWDS. A coiled-coil region spans residues 689–719; that stretch reads VQRSLLEDKEKVSELEAVMEKQKKKVEGEVE.

This sequence belongs to the EPS8 family. As to quaternary structure, interacts with ABI1. Part of a complex that contains SOS1, ABI1 and EPS8L2. Associates with F-actin. As to expression, detected in placenta.

The protein localises to the cytoplasm. Functionally, stimulates guanine exchange activity of SOS1. May play a role in membrane ruffling and remodeling of the actin cytoskeleton. The sequence is that of Epidermal growth factor receptor kinase substrate 8-like protein 1 (EPS8L1) from Homo sapiens (Human).